The chain runs to 336 residues: Fructose-1,6-bisphosphatase class 1 (336 aa).

Residues glutamate 90, aspartate 112, leucine 114, and aspartate 115 each contribute to the Mg(2+) site. Substrate contacts are provided by residues aspartate 115–serine 118, asparagine 211, and lysine 277. Glutamate 283 contacts Mg(2+).

It belongs to the FBPase class 1 family. As to quaternary structure, homotetramer. Requires Mg(2+) as cofactor.

It is found in the cytoplasm. It catalyses the reaction beta-D-fructose 1,6-bisphosphate + H2O = beta-D-fructose 6-phosphate + phosphate. Its pathway is carbohydrate biosynthesis; gluconeogenesis. The sequence is that of Fructose-1,6-bisphosphatase class 1 from Pseudomonas syringae pv. syringae (strain B728a).